Here is a 166-residue protein sequence, read N- to C-terminus: Large ribosomal subunit protein uL10 (166 aa).

The protein belongs to the universal ribosomal protein uL10 family. As to quaternary structure, part of the ribosomal stalk of the 50S ribosomal subunit. The N-terminus interacts with L11 and the large rRNA to form the base of the stalk. The C-terminus forms an elongated spine to which L12 dimers bind in a sequential fashion forming a multimeric L10(L12)X complex.

Functionally, forms part of the ribosomal stalk, playing a central role in the interaction of the ribosome with GTP-bound translation factors. The chain is Large ribosomal subunit protein uL10 from Neisseria gonorrhoeae (strain ATCC 700825 / FA 1090).